A 296-amino-acid chain; its full sequence is Aquaporin PIP1-6 (296 aa).

2 consecutive transmembrane segments (helical) span residues 63 to 83 and 98 to 120; these read IAEF…VMGV and IAWA…SGGH. The NPA 1 motif lies at 122 to 124; the sequence is NPA. Transmembrane regions (helical) follow at residues 141 to 161, 183 to 203, and 217 to 237; these read VYYV…VKAF, GDGL…VFSA, and ALAP…TIPI. Positions 243–245 match the NPA 2 motif; it reads NPA. A helical transmembrane segment spans residues 265-285; sequence IFWVGPFAGAALAAVYHQVVL.

It belongs to the MIP/aquaporin (TC 1.A.8) family. PIP (TC 1.A.8.11) subfamily.

Its subcellular location is the cell membrane. In terms of biological role, aquaporins facilitate the transport of water and small neutral solutes across cell membranes. The protein is Aquaporin PIP1-6 (PIP1-6) of Zea mays (Maize).